The sequence spans 147 residues: Fibromodulin (147 aa).

LRR repeat units lie at residues 1–15 (LDHN…PLPR), 16–37 (SLRE…ALEG), 40–61 (NLTA…MRGL), 63–84 (SLIL…LPSA), 85–105 (LEQL…YFRG), and 108–128 (KLLY…ASNT). A glycan (N-linked (GlcNAc...) asparagine) is linked at Asn5. Asn40 carries N-linked (GlcNAc...) asparagine glycosylation. An N-linked (GlcNAc...) asparagine glycan is attached at Asn130. Residues 133-147 (SLLELDLSYNQLQKI) form an LRR 7 repeat.

Belongs to the small leucine-rich proteoglycan (SLRP) family. SLRP class II subfamily. As to quaternary structure, binds to type I and type II collagen. Post-translationally, binds keratan sulfate chains. Sulfated on tyrosine residues. In terms of processing, the N-terminus is blocked by a pyrrolidone carboxylic acid generated by post-translational modification of N-terminal glutamine.

It is found in the secreted. The protein resides in the extracellular space. The protein localises to the extracellular matrix. Functionally, affects the rate of fibrils formation. May have a primary role in collagen fibrillogenesis. The sequence is that of Fibromodulin (FMOD) from Oryctolagus cuniculus (Rabbit).